A 517-amino-acid chain; its full sequence is Crotonobetaine/carnitine--CoA ligase (517 aa).

It belongs to the ATP-dependent AMP-binding enzyme family.

It catalyses the reaction 4-(trimethylamino)butanoate + ATP + CoA = 4-(trimethylamino)butanoyl-CoA + AMP + diphosphate. The enzyme catalyses crotonobetaine + ATP + CoA = crotonobetainyl-CoA + AMP + diphosphate. The catalysed reaction is (R)-carnitine + ATP + CoA = (R)-carnitinyl-CoA + AMP + diphosphate. Its pathway is amine and polyamine metabolism; carnitine metabolism. Catalyzes the transfer of CoA to carnitine, generating the initial carnitinyl-CoA needed for the CaiB reaction cycle. Also has activity toward crotonobetaine and gamma-butyrobetaine. In Escherichia coli O157:H7, this protein is Crotonobetaine/carnitine--CoA ligase.